The chain runs to 153 residues: Endoribonuclease YbeY (153 aa).

Zn(2+) contacts are provided by histidine 114, histidine 118, and histidine 124.

This sequence belongs to the endoribonuclease YbeY family. Zn(2+) is required as a cofactor.

It localises to the cytoplasm. Its function is as follows. Single strand-specific metallo-endoribonuclease involved in late-stage 70S ribosome quality control and in maturation of the 3' terminus of the 16S rRNA. This Shewanella amazonensis (strain ATCC BAA-1098 / SB2B) protein is Endoribonuclease YbeY.